A 62-amino-acid chain; its full sequence is Photosystem II reaction center protein Z (62 aa).

A run of 2 helical transmembrane segments spans residues 8–28 and 41–61; these read AVFALIATSSILLISVPVVFA and FSGTSLWIGLVFLVAILNSLI.

The protein belongs to the PsbZ family. PSII is composed of 1 copy each of membrane proteins PsbA, PsbB, PsbC, PsbD, PsbE, PsbF, PsbH, PsbI, PsbJ, PsbK, PsbL, PsbM, PsbT, PsbY, PsbZ, Psb30/Ycf12, at least 3 peripheral proteins of the oxygen-evolving complex and a large number of cofactors. It forms dimeric complexes.

It is found in the plastid. Its subcellular location is the chloroplast thylakoid membrane. May control the interaction of photosystem II (PSII) cores with the light-harvesting antenna, regulates electron flow through the 2 photosystem reaction centers. PSII is a light-driven water plastoquinone oxidoreductase, using light energy to abstract electrons from H(2)O, generating a proton gradient subsequently used for ATP formation. The polypeptide is Photosystem II reaction center protein Z (Calycanthus floridus var. glaucus (Eastern sweetshrub)).